The sequence spans 213 residues: T-cell surface glycoprotein CD8 beta chain (213 aa).

A signal peptide spans 1-21 (MQPWLWLVFSMKLAALWSSSA). In terms of domain architecture, Ig-like V-type spans 22-133 (LIQTPSSLLV…KMVFGTGTKL (112 aa)). The Extracellular segment spans residues 22–175 (LIQTPSSLLV…QKGLTCSLTT (154 aa)). An N-linked (GlcNAc...) asparagine glycan is attached at Asn-34. Cys-41 and Cys-117 form a disulfide bridge. Residues 176-196 (LSLLVVCILLLLAFLGVAVYF) form a helical membrane-spanning segment. The Cytoplasmic portion of the chain corresponds to 197–213 (YCVRRRARIHFMKQFHK).

As to quaternary structure, forms disulfide-linked heterodimers with CD8A at the cell surface. Interacts with CD3D; this interaction couples TCR-CD3 with CD8. Interacts with LCK. In terms of processing, palmitoylated at the cytoplasmic tail and thereby targets the heterodimer CD8A/CD8B to lipid rafts unlike CD8A homodimers.

It is found in the membrane. Functionally, integral membrane glycoprotein that plays an essential role in the immune response and serves multiple functions in responses against both external and internal offenses. In T-cells, functions primarily as a coreceptor for MHC class I molecule:peptide complex. The antigens presented by class I peptides are derived from cytosolic proteins while class II derived from extracellular proteins. Interacts simultaneously with the T-cell receptor (TCR) and the MHC class I proteins presented by antigen presenting cells (APCs). In turn, recruits the Src kinase LCK to the vicinity of the TCR-CD3 complex. A palmitoylation site in the cytoplasmic tail of CD8B chain contributes to partitioning of CD8 into the plasma membrane lipid rafts where signaling proteins are enriched. Once LCK recruited, it initiates different intracellular signaling pathways by phosphorylating various substrates ultimately leading to lymphokine production, motility, adhesion and activation of cytotoxic T-lymphocytes (CTLs). Additionally, plays a critical role in thymic selection of CD8+ T-cells. The polypeptide is T-cell surface glycoprotein CD8 beta chain (Cd8b) (Mus musculus (Mouse)).